We begin with the raw amino-acid sequence, 826 residues long: Protein FAM171B (826 aa).

A signal peptide spans M1–A32. Topologically, residues E33–T353 are extracellular. The interval Q52–G71 is disordered. N108, N113, N213, and N268 each carry an N-linked (GlcNAc...) asparagine glycan. The chain crosses the membrane as a helical span at residues V354–L374. Residues L375–N826 lie on the Cytoplasmic side of the membrane. Disordered stretches follow at residues N429–E448, Q474–Q493, and H774–N826. Over residues Q438–E448 the composition is skewed to basic and acidic residues. Over residues Q474–E486 the composition is skewed to polar residues. Residues H774–V786 are compositionally biased toward basic and acidic residues. Residue S794 is modified to Phosphoserine. Basic and acidic residues predominate over residues A805 to N826.

The protein belongs to the FAM171 family.

The protein localises to the cytoplasmic granule. Its subcellular location is the membrane. This is Protein FAM171B (FAM171B) from Homo sapiens (Human).